A 368-amino-acid polypeptide reads, in one-letter code: 4-hydroxy-3-methylbut-2-en-1-yl diphosphate synthase (flavodoxin) (368 aa).

[4Fe-4S] cluster contacts are provided by cysteine 268, cysteine 271, cysteine 303, and glutamate 310.

It belongs to the IspG family. [4Fe-4S] cluster is required as a cofactor.

The catalysed reaction is (2E)-4-hydroxy-3-methylbut-2-enyl diphosphate + oxidized [flavodoxin] + H2O + 2 H(+) = 2-C-methyl-D-erythritol 2,4-cyclic diphosphate + reduced [flavodoxin]. It participates in isoprenoid biosynthesis; isopentenyl diphosphate biosynthesis via DXP pathway; isopentenyl diphosphate from 1-deoxy-D-xylulose 5-phosphate: step 5/6. Its function is as follows. Converts 2C-methyl-D-erythritol 2,4-cyclodiphosphate (ME-2,4cPP) into 1-hydroxy-2-methyl-2-(E)-butenyl 4-diphosphate. This is 4-hydroxy-3-methylbut-2-en-1-yl diphosphate synthase (flavodoxin) from Listeria monocytogenes serovar 1/2a (strain ATCC BAA-679 / EGD-e).